Here is a 787-residue protein sequence, read N- to C-terminus: Pyridoxal-dependent decarboxylase domain-containing protein 1 (787 aa).

Residues 26 to 44 (MLEKSPRRTEEENGKKPVS) are compositionally biased toward basic and acidic residues. The tract at residues 26 to 52 (MLEKSPRRTEEENGKKPVSEDIPGPLQ) is disordered. Position 652 is a phosphoserine (serine 652). Residues 682-787 (QGTGVTPPPT…SQVEELERLR (106 aa)) form a disordered region. Phosphothreonine is present on residues threonine 687 and threonine 691. Phosphoserine is present on residues serine 710, serine 718, serine 722, and serine 748. The segment covering 725–748 (HIEDLEKVEQLSSGLEHDNLEAHS) has biased composition (basic and acidic residues). Positions 759-771 (TARQTEALQNQAQ) are enriched in polar residues. A compositionally biased stretch (basic and acidic residues) spans 772-787 (HQEDDHSQVEELERLR). Position 778 is a phosphoserine (serine 778).

This sequence belongs to the group II decarboxylase family. Pyridoxal 5'-phosphate is required as a cofactor.

The protein is Pyridoxal-dependent decarboxylase domain-containing protein 1 (Pdxdc1) of Mus musculus (Mouse).